The chain runs to 482 residues: Wax ester synthase/diacylglycerol acyltransferase 9 (482 aa).

The Cytoplasmic segment spans residues 1–195; sequence MEKKMKEEEE…FRLVLVVCST (195 aa). Catalysis depends on His-140, which acts as the Proton acceptor. The chain crosses the membrane as a helical span at residues 196–216; the sequence is VRLIWNTLVDSFLCMATIFFL. Residues 217–328 lie on the Lumenal side of the membrane; it reads KDTDTPLKGK…AKGSKCRWGN (112 aa). The helical transmembrane segment at 329 to 349 threads the bilayer; sequence YISVILFPFTIALQSDPLVYL. The Cytoplasmic portion of the chain corresponds to 350 to 366; sequence SNVKSMIDRKKNSLITY. The helical transmembrane segment at 367-387 threads the bilayer; that stretch reads IIYTFSEFVIKAFGINVAVAF. Topologically, residues 388-482 are lumenal; sequence QRKIMLNTTM…LEKGLPNHVN (95 aa). Asn-394 is a glycosylation site (N-linked (GlcNAc...) asparagine).

In the N-terminal section; belongs to the long-chain O-acyltransferase family. As to expression, mostly expressed in stems and siliques.

It localises to the cell membrane. The protein localises to the endoplasmic reticulum membrane. It carries out the reaction an acyl-CoA + a 1,2-diacyl-sn-glycerol = a triacyl-sn-glycerol + CoA. It catalyses the reaction a long chain fatty alcohol + a fatty acyl-CoA = a wax ester + CoA. The protein operates within glycerolipid metabolism; triacylglycerol biosynthesis. It participates in lipid metabolism. In terms of biological role, bifunctional wax ester synthase/diacylglycerol acyltransferase. Involved in cuticular wax biosynthesis. The sequence is that of Wax ester synthase/diacylglycerol acyltransferase 9 from Arabidopsis thaliana (Mouse-ear cress).